The following is a 407-amino-acid chain: Dephospho-CoA kinase (407 aa).

Positions 3 to 204 constitute a DPCK domain; sequence RIGLTGGIGA…QPFAHNLAQR (202 aa). 11–16 provides a ligand contact to ATP; it reads GAGKSL. A UPF0157 region spans residues 196–407; that stretch reads PFAHNLAQRQ…EWADAVHWRP (212 aa).

It in the N-terminal section; belongs to the CoaE family. The protein in the C-terminal section; belongs to the UPF0157 (GrpB) family.

Its subcellular location is the cytoplasm. The catalysed reaction is 3'-dephospho-CoA + ATP = ADP + CoA + H(+). It functions in the pathway cofactor biosynthesis; coenzyme A biosynthesis; CoA from (R)-pantothenate: step 5/5. Functionally, catalyzes the phosphorylation of the 3'-hydroxyl group of dephosphocoenzyme A to form coenzyme A. In Mycobacterium bovis (strain ATCC BAA-935 / AF2122/97), this protein is Dephospho-CoA kinase.